The primary structure comprises 262 residues: MSWSDKRRHWRARKSQVNWYLWSGIGFLSLVIGSFVFGGYLLHKFLNDASTLPIEAVAIKGERTYTTDKDIQIALQDLMQRSFFSADITLVQQALEALPWVYRASVRREWPAKLRVYLQEQQPAAHWNGTAWLNVHGEVFEAPSHPELEHLPHLSGPDDMGTEVLTAYAQVNSLLKINGFTLASLNLTPRHAWHATLGNGIVLDLGREDKMARIQRFITVYPLLAKQDKPIARVDLRYDTGLAVGWGDAQTREPIINDEKPR.

Over 1–20 (MSWSDKRRHWRARKSQVNWY) the chain is Cytoplasmic. Residues 21-41 (LWSGIGFLSLVIGSFVFGGYL) traverse the membrane as a helical segment. Over 42 to 262 (LHKFLNDAST…EPIINDEKPR (221 aa)) the chain is Periplasmic. Positions 52–121 (LPIEAVAIKG…AKLRVYLQEQ (70 aa)) constitute a POTRA domain.

The protein belongs to the FtsQ/DivIB family. FtsQ subfamily. In terms of assembly, part of a complex composed of FtsB, FtsL and FtsQ.

Its subcellular location is the cell inner membrane. Essential cell division protein. May link together the upstream cell division proteins, which are predominantly cytoplasmic, with the downstream cell division proteins, which are predominantly periplasmic. May control correct divisome assembly. The chain is Cell division protein FtsQ from Shewanella oneidensis (strain ATCC 700550 / JCM 31522 / CIP 106686 / LMG 19005 / NCIMB 14063 / MR-1).